The sequence spans 230 residues: UPF0502 protein Oter_3715 (230 aa).

This sequence belongs to the UPF0502 family.

This Opitutus terrae (strain DSM 11246 / JCM 15787 / PB90-1) protein is UPF0502 protein Oter_3715.